Consider the following 388-residue polypeptide: Succinate--CoA ligase [ADP-forming] subunit beta (388 aa).

The ATP-grasp domain occupies K9 to Q244. Residues K46, G53–G55, E99, T102, and E107 each bind ATP. Positions 199 and 213 each coordinate Mg(2+). Substrate-binding positions include N264 and G321 to V323.

Belongs to the succinate/malate CoA ligase beta subunit family. As to quaternary structure, heterotetramer of two alpha and two beta subunits. The cofactor is Mg(2+).

The catalysed reaction is succinate + ATP + CoA = succinyl-CoA + ADP + phosphate. It carries out the reaction GTP + succinate + CoA = succinyl-CoA + GDP + phosphate. It participates in carbohydrate metabolism; tricarboxylic acid cycle; succinate from succinyl-CoA (ligase route): step 1/1. In terms of biological role, succinyl-CoA synthetase functions in the citric acid cycle (TCA), coupling the hydrolysis of succinyl-CoA to the synthesis of either ATP or GTP and thus represents the only step of substrate-level phosphorylation in the TCA. The beta subunit provides nucleotide specificity of the enzyme and binds the substrate succinate, while the binding sites for coenzyme A and phosphate are found in the alpha subunit. In Salmonella arizonae (strain ATCC BAA-731 / CDC346-86 / RSK2980), this protein is Succinate--CoA ligase [ADP-forming] subunit beta.